Here is a 147-residue protein sequence, read N- to C-terminus: Large ribosomal subunit protein bL9 (147 aa).

It belongs to the bacterial ribosomal protein bL9 family.

Binds to the 23S rRNA. The polypeptide is Large ribosomal subunit protein bL9 (Mycoplasma capricolum subsp. capricolum (strain California kid / ATCC 27343 / NCTC 10154)).